The sequence spans 500 residues: Lysine--tRNA ligase (500 aa).

The Mg(2+) site is built by Glu-410 and Glu-417.

This sequence belongs to the class-II aminoacyl-tRNA synthetase family. Homodimer. It depends on Mg(2+) as a cofactor.

The protein resides in the cytoplasm. The enzyme catalyses tRNA(Lys) + L-lysine + ATP = L-lysyl-tRNA(Lys) + AMP + diphosphate. The polypeptide is Lysine--tRNA ligase (Shewanella loihica (strain ATCC BAA-1088 / PV-4)).